The primary structure comprises 527 residues: Pyruvate kinase 2, cytosolic (527 aa).

R58 lines the substrate pocket. 4 residues coordinate K(+): D60, S62, D92, and T93. Residue D60–W63 coordinates ATP. K256 is a binding site for substrate. E258 is a binding site for Mg(2+). Substrate-binding residues include G281, N282, and T313. Mg(2+) is bound at residue N282.

This sequence belongs to the pyruvate kinase family. In terms of assembly, homotetramer. It depends on Mg(2+) as a cofactor. K(+) serves as cofactor.

It localises to the cytoplasm. The protein localises to the cytosol. The catalysed reaction is pyruvate + ATP = phosphoenolpyruvate + ADP + H(+). Its pathway is carbohydrate degradation; glycolysis; pyruvate from D-glyceraldehyde 3-phosphate: step 5/5. Key regulatory enzyme of the glycolytic pathway that catalyzes the final step of glycolysis, converting ADP and phosphoenolpyruvate (PEP) to ATP and pyruvate by essentially irreversible transphosphorylation. The protein is Pyruvate kinase 2, cytosolic of Oryza sativa subsp. indica (Rice).